The primary structure comprises 224 residues: MTDSLIAIVPAAGVGQRAGRPDLPKQYRLLAGQPMLRWAVAALLADARIGQVRVAVSPGDERAGAALAGLPRTVCRPCGGPTRAATVAAALADSNAADSDWILVHDAARPGLPPDALARLIDACLADAVGGLLALPVADTVKAGGPRVRATLDRDGLWLAQTPQMFRAGVLRAALAAAQAGGGTVTDEASAIEAAGHAPLLVPGAMRNFKVTWPDDFELMEKWL.

This sequence belongs to the IspD/TarI cytidylyltransferase family. IspD subfamily.

It carries out the reaction 2-C-methyl-D-erythritol 4-phosphate + CTP + H(+) = 4-CDP-2-C-methyl-D-erythritol + diphosphate. It functions in the pathway isoprenoid biosynthesis; isopentenyl diphosphate biosynthesis via DXP pathway; isopentenyl diphosphate from 1-deoxy-D-xylulose 5-phosphate: step 2/6. Its function is as follows. Catalyzes the formation of 4-diphosphocytidyl-2-C-methyl-D-erythritol from CTP and 2-C-methyl-D-erythritol 4-phosphate (MEP). This Bordetella petrii (strain ATCC BAA-461 / DSM 12804 / CCUG 43448) protein is 2-C-methyl-D-erythritol 4-phosphate cytidylyltransferase.